The primary structure comprises 400 residues: Enoyl-[acyl-carrier-protein] reductase [NADH] (400 aa).

NAD(+) is bound by residues 48 to 53 (GSSSGY), 74 to 75 (FE), 111 to 112 (DA), and 139 to 140 (LA). Residue tyrosine 225 participates in substrate binding. The active-site Proton donor is tyrosine 235. Residues lysine 244 and 273-275 (VVT) contribute to the NAD(+) site.

It belongs to the TER reductase family. As to quaternary structure, monomer.

The enzyme catalyses a 2,3-saturated acyl-[ACP] + NAD(+) = a (2E)-enoyl-[ACP] + NADH + H(+). It functions in the pathway lipid metabolism; fatty acid biosynthesis. Its function is as follows. Involved in the final reduction of the elongation cycle of fatty acid synthesis (FAS II). Catalyzes the reduction of a carbon-carbon double bond in an enoyl moiety that is covalently linked to an acyl carrier protein (ACP). This is Enoyl-[acyl-carrier-protein] reductase [NADH] from Shewanella piezotolerans (strain WP3 / JCM 13877).